The chain runs to 195 residues: U8 snoRNA-decapping enzyme (195 aa).

A Nudix hydrolase domain is found at 18–173 (GWRHACHALL…IGSAREQLLE (156 aa)). Substrate contacts are provided by His-24, Arg-50, and Phe-57. Mn(2+) is bound by residues Gly-59, Glu-76, Glu-80, and His-99. Positions 61-82 (FVDTQDRSLEDGLNRELREELG) match the Nudix box motif. Residue Gln-170 coordinates substrate. Glu-173 lines the Mn(2+) pocket.

It belongs to the Nudix hydrolase family. NUDT16 subfamily. Homodimer. Requires Mg(2+) as cofactor. Mn(2+) serves as cofactor. It depends on Co(2+) as a cofactor. Expressed strongly in lung, kidney, adrenal gland, testis, heart and brain.

The protein resides in the nucleus. The protein localises to the nucleoplasm. It is found in the nucleolus. It localises to the cytoplasm. The catalysed reaction is a 5'-end (N(7)-methyl 5'-triphosphoguanosine)-ribonucleoside in mRNA + H2O = N(7)-methyl-GDP + a 5'-end phospho-ribonucleoside in mRNA + 2 H(+). The enzyme catalyses IDP + H2O = IMP + phosphate + H(+). It catalyses the reaction dIDP + H2O = dIMP + phosphate + H(+). It carries out the reaction a 5'-end NAD(+)-phospho-ribonucleoside in mRNA + H2O = a 5'-end phospho-adenosine-phospho-ribonucleoside in mRNA + beta-nicotinamide D-ribonucleotide + 2 H(+). The catalysed reaction is a 5'-end FAD-phospho-ribonucleoside in mRNA + H2O = a 5'-end phospho-adenosine-phospho-ribonucleoside in mRNA + FMN + 2 H(+). The enzyme catalyses a 5'-end CoA-ribonucleoside in mRNA + H2O = a 5'-end phospho-adenosine-phospho-ribonucleoside in mRNA + (R)-4'-phosphopantetheine + 2 H(+). The phosphatase activity is inhibited by the product IMP. RNA-binding and decapping enzyme that catalyzes the cleavage of the cap structure of snoRNAs and mRNAs in a metal-dependent manner. Part of the U8 snoRNP complex that is required for the accumulation of mature 5.8S and 28S rRNA. Has diphosphatase activity and removes m7G and/or m227G caps from U8 snoRNA and leaves a 5'monophosphate on the RNA. Also catalyzes the cleavage of the cap structure on mRNAs. Does not hydrolyze cap analog structures like 7-methylguanosine nucleoside triphosphate (m7GpppG). Also hydrolysis m7G- and m227G U3-capped RNAs but with less efficiencies. Has broad substrate specificity with manganese or cobalt as cofactor and can act on various RNA species. Binds to the U8 snoRNA; metal is not required for RNA-binding. May play a role in the regulation of snoRNAs and mRNAs degradation. Also acts as a phosphatase; hydrolyzes the non-canonical purine nucleotides inosine diphosphate (IDP) and deoxyinosine diphosphate (dITP) as well as guanosine diphosphate (GDP), deoxyguanosine diphosphate (dGDP), xanthine diphosphate (XDP), inosine triphosphate (ITP) and deoxyinosine triphosphate (ITP) to their respective monophosphate derivatives and does not distinguish between the deoxy- and ribose forms. The order of activity with different substrates is IDP &gt; dIDP &gt;&gt; GDP = dGDP &gt; XDP = ITP = dITP. Binds strongly to GTP, ITP and XTP. Participates in the hydrolysis of dIDP/IDP and probably excludes non-canonical purines from RNA and DNA precursor pools, thus preventing their incorporation into RNA and DNA and avoiding chromosomal lesions. Exhibits decapping activity towards NAD-capped RNAs and FAD-capped RNAs. Exhibits decapping activity towards dpCoA-capped RNAs in vitro. The sequence is that of U8 snoRNA-decapping enzyme (NUDT16) from Homo sapiens (Human).